Reading from the N-terminus, the 559-residue chain is Acetylcholinesterase-1 (559 aa).

A signal peptide spans Met1 to Gly21. Cysteines 92 and 114 form a disulfide. A substrate-binding site is contributed by Gly142 to Gly143. Ser223 functions as the Acyl-ester intermediate in the catalytic mechanism. At Ser223 the chain carries Phosphoserine. Cys276 and Cys293 are joined by a disulfide. Residues Asn278 and Asn342 are each glycosylated (N-linked (GlcNAc...) asparagine). Glu354 acts as the Charge relay system in catalysis. An N-linked (GlcNAc...) asparagine glycan is attached at Asn374. A disulfide bridge links Cys432 with Cys550. His471 (charge relay system) is an active-site residue.

Belongs to the type-B carboxylesterase/lipase family. Expressed by the venom gland.

The protein localises to the secreted. It catalyses the reaction acetylcholine + H2O = choline + acetate + H(+). In terms of biological role, terminates signal transduction at the neuromuscular junction by rapid hydrolysis of the acetylcholine released into the synaptic cleft. This chain is Acetylcholinesterase-1, found in Trittame loki (Brush-footed trapdoor spider).